Here is a 78-residue protein sequence, read N- to C-terminus: U-scoloptoxin(15)-Ssm2a (78 aa).

A signal peptide spans 1–23; sequence MEKKIIFLCFFVSLLTLPEFISS. The interval 34–37 is important for inhibition of KCNQ4; it reads PEKK. Disulfide bonds link C44–C70 and C48–C72.

The protein belongs to the SLPTX(15) family. As to expression, expressed by the venom gland.

The protein resides in the secreted. The chain is U-scoloptoxin(15)-Ssm2a from Scolopendra mutilans (Chinese red-headed centipede).